Consider the following 335-residue polypeptide: Ketol-acid reductoisomerase (NADP(+)) (335 aa).

Residues 5 to 185 form the KARI N-terminal Rossmann domain; the sequence is SKIYTDKDSN…GATRAGVIPT (181 aa). NADP(+) is bound by residues 28 to 31, Ser-56, and 86 to 89; these read YGSQ and DMVQ. Residue His-111 is part of the active site. Gly-137 contributes to the NADP(+) binding site. The region spanning 186–331 is the KARI C-terminal knotted domain; that stretch reads TFKEETETDL…NQLKDLIQKG (146 aa). Residues Asp-194, Glu-198, Glu-230, and Glu-234 each contribute to the Mg(2+) site. Ser-255 contacts substrate.

Belongs to the ketol-acid reductoisomerase family. Mg(2+) serves as cofactor.

The enzyme catalyses (2R)-2,3-dihydroxy-3-methylbutanoate + NADP(+) = (2S)-2-acetolactate + NADPH + H(+). It carries out the reaction (2R,3R)-2,3-dihydroxy-3-methylpentanoate + NADP(+) = (S)-2-ethyl-2-hydroxy-3-oxobutanoate + NADPH + H(+). It functions in the pathway amino-acid biosynthesis; L-isoleucine biosynthesis; L-isoleucine from 2-oxobutanoate: step 2/4. The protein operates within amino-acid biosynthesis; L-valine biosynthesis; L-valine from pyruvate: step 2/4. Its function is as follows. Involved in the biosynthesis of branched-chain amino acids (BCAA). Catalyzes an alkyl-migration followed by a ketol-acid reduction of (S)-2-acetolactate (S2AL) to yield (R)-2,3-dihydroxy-isovalerate. In the isomerase reaction, S2AL is rearranged via a Mg-dependent methyl migration to produce 3-hydroxy-3-methyl-2-ketobutyrate (HMKB). In the reductase reaction, this 2-ketoacid undergoes a metal-dependent reduction by NADPH to yield (R)-2,3-dihydroxy-isovalerate. The protein is Ketol-acid reductoisomerase (NADP(+)) of Saccharolobus islandicus (strain M.16.27) (Sulfolobus islandicus).